We begin with the raw amino-acid sequence, 206 residues long: N-(5'-phosphoribosyl)anthranilate isomerase (206 aa).

Belongs to the TrpF family.

The catalysed reaction is N-(5-phospho-beta-D-ribosyl)anthranilate = 1-(2-carboxyphenylamino)-1-deoxy-D-ribulose 5-phosphate. It functions in the pathway amino-acid biosynthesis; L-tryptophan biosynthesis; L-tryptophan from chorismate: step 3/5. The sequence is that of N-(5'-phosphoribosyl)anthranilate isomerase from Pseudomonas putida (strain ATCC 47054 / DSM 6125 / CFBP 8728 / NCIMB 11950 / KT2440).